A 694-amino-acid chain; its full sequence is Elongation factor G 2 (694 aa).

Residues 8-282 (TAIRNIGIMA…AVVSYLPSPL (275 aa)) enclose the tr-type G domain. GTP-binding positions include 17–24 (AHIDAGKT), 81–85 (DTPGH), and 135–138 (NKMD).

It belongs to the TRAFAC class translation factor GTPase superfamily. Classic translation factor GTPase family. EF-G/EF-2 subfamily.

It localises to the cytoplasm. Functionally, catalyzes the GTP-dependent ribosomal translocation step during translation elongation. During this step, the ribosome changes from the pre-translocational (PRE) to the post-translocational (POST) state as the newly formed A-site-bound peptidyl-tRNA and P-site-bound deacylated tRNA move to the P and E sites, respectively. Catalyzes the coordinated movement of the two tRNA molecules, the mRNA and conformational changes in the ribosome. The chain is Elongation factor G 2 from Syntrophomonas wolfei subsp. wolfei (strain DSM 2245B / Goettingen).